A 548-amino-acid polypeptide reads, in one-letter code: Chaperonin GroEL (548 aa).

ATP contacts are provided by residues 29 to 32 (TLGP), K50, 86 to 90 (DGTTT), G416, and D497.

This sequence belongs to the chaperonin (HSP60) family. Forms a cylinder of 14 subunits composed of two heptameric rings stacked back-to-back. Interacts with the co-chaperonin GroES.

It localises to the cytoplasm. It catalyses the reaction ATP + H2O + a folded polypeptide = ADP + phosphate + an unfolded polypeptide.. Functionally, together with its co-chaperonin GroES, plays an essential role in assisting protein folding. The GroEL-GroES system forms a nano-cage that allows encapsulation of the non-native substrate proteins and provides a physical environment optimized to promote and accelerate protein folding. In Neorickettsia sennetsu (strain ATCC VR-367 / Miyayama) (Ehrlichia sennetsu), this protein is Chaperonin GroEL.